The chain runs to 377 residues: Lipoyl synthase, mitochondrial (377 aa).

Residues cysteine 103, cysteine 108, cysteine 114, cysteine 134, cysteine 138, cysteine 141, and serine 349 each coordinate [4Fe-4S] cluster. Positions 119–338 (EHGTQTATIM…EERGNELGFL (220 aa)) constitute a Radical SAM core domain.

It belongs to the radical SAM superfamily. Lipoyl synthase family. The cofactor is [4Fe-4S] cluster.

It localises to the mitochondrion. The catalysed reaction is [[Fe-S] cluster scaffold protein carrying a second [4Fe-4S](2+) cluster] + N(6)-octanoyl-L-lysyl-[protein] + 2 oxidized [2Fe-2S]-[ferredoxin] + 2 S-adenosyl-L-methionine + 4 H(+) = [[Fe-S] cluster scaffold protein] + N(6)-[(R)-dihydrolipoyl]-L-lysyl-[protein] + 4 Fe(3+) + 2 hydrogen sulfide + 2 5'-deoxyadenosine + 2 L-methionine + 2 reduced [2Fe-2S]-[ferredoxin]. It participates in protein modification; protein lipoylation via endogenous pathway; protein N(6)-(lipoyl)lysine from octanoyl-[acyl-carrier-protein]: step 2/2. Functionally, catalyzes the radical-mediated insertion of two sulfur atoms into the C-6 and C-8 positions of the octanoyl moiety bound to the lipoyl domains of lipoate-dependent enzymes, thereby converting the octanoylated domains into lipoylated derivatives. This Drosophila melanogaster (Fruit fly) protein is Lipoyl synthase, mitochondrial.